Here is a 262-residue protein sequence, read N- to C-terminus: Vibriobactin-specific 2,3-dihydro-2,3-dihydroxybenzoate dehydrogenase (262 aa).

An NAD(+)-binding site is contributed by 12-36 (LLVGSARGIGFSVLEHLLQAGAQVM). Ser-145 is a substrate binding site. Tyr-158 functions as the Proton acceptor in the catalytic mechanism.

Belongs to the short-chain dehydrogenases/reductases (SDR) family.

It catalyses the reaction (2S,3S)-2,3-dihydroxy-2,3-dihydrobenzoate + NAD(+) = 2,3-dihydroxybenzoate + NADH + H(+). It participates in siderophore biosynthesis; vibriobactin biosynthesis. Its function is as follows. Involved in an early step of the biosynthesis of the catechol siderophore vibriobactin. Vibriobactin is a chelating compound involved in transporting iron from the bacterial environment into the cell cytoplasm. This chain is Vibriobactin-specific 2,3-dihydro-2,3-dihydroxybenzoate dehydrogenase (vibA), found in Vibrio cholerae serotype O1 (strain ATCC 39315 / El Tor Inaba N16961).